We begin with the raw amino-acid sequence, 286 residues long: Beta-lactamase SHV-8 (286 aa).

The first 21 residues, 1-21 (MRYIRLCIISLLATLPLAVHA), serve as a signal peptide directing secretion. Ser66 serves as the catalytic Acyl-ester intermediate. Cys73 and Cys119 are disulfide-bonded. Residue Glu164 is the Proton acceptor of the active site. 230 to 232 (KTG) is a binding site for substrate.

The protein belongs to the class-A beta-lactamase family.

The enzyme catalyses a beta-lactam + H2O = a substituted beta-amino acid. Its function is as follows. SHV enzymes hydrolyze broad spectrum cephalosporins notably cefotaxime and ceftazidime. In Escherichia coli, this protein is Beta-lactamase SHV-8 (bla).